Consider the following 101-residue polypeptide: Small ribosomal subunit protein bS18c (101 aa).

The protein belongs to the bacterial ribosomal protein bS18 family. In terms of assembly, part of the 30S ribosomal subunit.

The protein resides in the plastid. Its subcellular location is the chloroplast. This is Small ribosomal subunit protein bS18c from Eucalyptus globulus subsp. globulus (Tasmanian blue gum).